Consider the following 461-residue polypeptide: Kynureninase (461 aa).

Pyridoxal 5'-phosphate-binding positions include Leu114, Thr115, 142–145, Asp228, His231, and Tyr253; that span reads FPSD. The residue at position 254 (Lys254) is an N6-(pyridoxal phosphate)lysine. Residues Trp288 and Asn316 each contribute to the pyridoxal 5'-phosphate site.

The protein belongs to the kynureninase family. As to quaternary structure, homodimer. The cofactor is pyridoxal 5'-phosphate.

It is found in the cytoplasm. It carries out the reaction L-kynurenine + H2O = anthranilate + L-alanine + H(+). The catalysed reaction is 3-hydroxy-L-kynurenine + H2O = 3-hydroxyanthranilate + L-alanine + H(+). It functions in the pathway amino-acid degradation; L-kynurenine degradation; L-alanine and anthranilate from L-kynurenine: step 1/1. The protein operates within cofactor biosynthesis; NAD(+) biosynthesis; quinolinate from L-kynurenine: step 2/3. Its function is as follows. Catalyzes the cleavage of L-kynurenine (L-Kyn) and L-3-hydroxykynurenine (L-3OHKyn) into anthranilic acid (AA) and 3-hydroxyanthranilic acid (3-OHAA), respectively. The sequence is that of Kynureninase from Lodderomyces elongisporus (strain ATCC 11503 / CBS 2605 / JCM 1781 / NBRC 1676 / NRRL YB-4239) (Yeast).